A 125-amino-acid chain; its full sequence is Translation initiation factor 5A (125 aa).

Position 36 is a hypusine (K36).

It belongs to the eIF-5A family.

It localises to the cytoplasm. In terms of biological role, functions by promoting the formation of the first peptide bond. In Halorubrum lacusprofundi (strain ATCC 49239 / DSM 5036 / JCM 8891 / ACAM 34), this protein is Translation initiation factor 5A (eIF5A).